Here is a 947-residue protein sequence, read N- to C-terminus: Bifunctional glutamine synthetase adenylyltransferase/adenylyl-removing enzyme (947 aa).

The tract at residues Met1–Glu440 is adenylyl removase. The interval Ser450–Val947 is adenylyl transferase.

This sequence belongs to the GlnE family. It depends on Mg(2+) as a cofactor.

It catalyses the reaction [glutamine synthetase]-O(4)-(5'-adenylyl)-L-tyrosine + phosphate = [glutamine synthetase]-L-tyrosine + ADP. The catalysed reaction is [glutamine synthetase]-L-tyrosine + ATP = [glutamine synthetase]-O(4)-(5'-adenylyl)-L-tyrosine + diphosphate. Functionally, involved in the regulation of glutamine synthetase GlnA, a key enzyme in the process to assimilate ammonia. When cellular nitrogen levels are high, the C-terminal adenylyl transferase (AT) inactivates GlnA by covalent transfer of an adenylyl group from ATP to specific tyrosine residue of GlnA, thus reducing its activity. Conversely, when nitrogen levels are low, the N-terminal adenylyl removase (AR) activates GlnA by removing the adenylyl group by phosphorolysis, increasing its activity. The regulatory region of GlnE binds the signal transduction protein PII (GlnB) which indicates the nitrogen status of the cell. The chain is Bifunctional glutamine synthetase adenylyltransferase/adenylyl-removing enzyme from Salmonella agona (strain SL483).